A 477-amino-acid polypeptide reads, in one-letter code: TNF receptor-associated factor family protein DDB_G0278133 (477 aa).

An RING-type; degenerate zinc finger spans residues 45–88 (CDICTLELFIESEPKALQCKEGHLACRRCWERYLSTNKQCMTCK). 2 consecutive TRAF-type zinc fingers follow at residues 160–211 (NHYK…SSLS) and 212–267 (DHHK…SKMQ). Residues 271–326 (LEHSVTKLMNQNEIIKKDNQNLDQEKKIEEIKLKLNNLLNNYIQLKNEIAVLKQNS) are a coiled coil. One can recognise an MATH domain in the interval 331–463 (VYSNKWIIPE…FLNEKGELEI (133 aa)).

It belongs to the TNF receptor-associated factor family. A subfamily.

Its subcellular location is the cytoplasm. Its function is as follows. Probable adapter protein and signal transducer that links members of the tumor necrosis factor receptor family to different signaling pathways by association with the receptor cytoplasmic domain and kinases. This is TNF receptor-associated factor family protein DDB_G0278133 from Dictyostelium discoideum (Social amoeba).